Here is a 678-residue protein sequence, read N- to C-terminus: UvrABC system protein B (678 aa).

One can recognise a Helicase ATP-binding domain in the interval 35-422; sequence EGVSDGLMFQ…ADNVVEQVVR (388 aa). Residue 48–55 participates in ATP binding; that stretch reads GVTGSGKT. The Beta-hairpin motif lies at 101–124; sequence YYDYYQPEAYVPTRDLFIEKDSSI. The Helicase C-terminal domain maps to 439-605; sequence QVDDLLGEIH…GVSKAVRELI (167 aa). In terms of domain architecture, UVR spans 633-668; that stretch reads AREIRRLEKLMMDHARNLEFEQAAAARDALNALKSR.

The protein belongs to the UvrB family. Forms a heterotetramer with UvrA during the search for lesions. Interacts with UvrC in an incision complex.

It is found in the cytoplasm. In terms of biological role, the UvrABC repair system catalyzes the recognition and processing of DNA lesions. A damage recognition complex composed of 2 UvrA and 2 UvrB subunits scans DNA for abnormalities. Upon binding of the UvrA(2)B(2) complex to a putative damaged site, the DNA wraps around one UvrB monomer. DNA wrap is dependent on ATP binding by UvrB and probably causes local melting of the DNA helix, facilitating insertion of UvrB beta-hairpin between the DNA strands. Then UvrB probes one DNA strand for the presence of a lesion. If a lesion is found the UvrA subunits dissociate and the UvrB-DNA preincision complex is formed. This complex is subsequently bound by UvrC and the second UvrB is released. If no lesion is found, the DNA wraps around the other UvrB subunit that will check the other stand for damage. This chain is UvrABC system protein B, found in Bordetella pertussis (strain Tohama I / ATCC BAA-589 / NCTC 13251).